The sequence spans 132 residues: Cytochrome c' (132 aa).

Residues R10, Q11, D65, C122, C125, and H126 each coordinate heme c.

Binds 1 heme c group covalently per subunit.

Functionally, cytochrome c' is the most widely occurring bacterial c-type cytochrome. Cytochromes c' are high-spin proteins and the heme has no sixth ligand. Their exact function is not known. This Halomonas halodenitrificans (strain ATCC 12084 / NCIMB 8669) (Paracoccus halodenitrificans) protein is Cytochrome c'.